Consider the following 249-residue polypeptide: 2,3-bisphosphoglycerate-dependent phosphoglycerate mutase (249 aa).

Substrate-binding positions include 9-16 (RHGQSQWN), 22-23 (TG), Arg-61, 88-91 (ERHY), Lys-99, 115-116 (RR), and 184-185 (GN). His-10 serves as the catalytic Tele-phosphohistidine intermediate. The active-site Proton donor/acceptor is the Glu-88.

Belongs to the phosphoglycerate mutase family. BPG-dependent PGAM subfamily. Homodimer.

The catalysed reaction is (2R)-2-phosphoglycerate = (2R)-3-phosphoglycerate. It participates in carbohydrate degradation; glycolysis; pyruvate from D-glyceraldehyde 3-phosphate: step 3/5. Catalyzes the interconversion of 2-phosphoglycerate and 3-phosphoglycerate. This chain is 2,3-bisphosphoglycerate-dependent phosphoglycerate mutase, found in Xanthomonas oryzae pv. oryzae (strain MAFF 311018).